The sequence spans 188 residues: Large ribosomal subunit protein eL18 (188 aa).

A disordered region spans residues 153-188 (GKAPGTPHSHTKPYIRSKGRKFERARGRRASRGYKN). Composition is skewed to basic residues over residues 161–171 (SHTKPYIRSKG) and 178–188 (RGRRASRGYKN).

Belongs to the eukaryotic ribosomal protein eL18 family. In terms of assembly, component of the large ribosomal subunit.

The protein resides in the cytoplasm. Its subcellular location is the cytosol. The protein localises to the rough endoplasmic reticulum. Functionally, component of the large ribosomal subunit. The ribosome is a large ribonucleoprotein complex responsible for the synthesis of proteins in the cell. The chain is Large ribosomal subunit protein eL18 (rpl18) from Ictalurus punctatus (Channel catfish).